The chain runs to 493 residues: Ketol-acid reductoisomerase (NADP(+)) (493 aa).

The KARI N-terminal Rossmann domain maps to 14–208 (LDQLGRCRFM…GGHRAGVLES (195 aa)). NADP(+) is bound by residues 45–48 (CGAQ), arginine 68, arginine 76, serine 78, and 108–110 (DKQ). Residue histidine 132 is part of the active site. Residue glycine 158 coordinates NADP(+). KARI C-terminal knotted domains follow at residues 209–345 (SFVA…APKG) and 346–486 (ENIK…MTDM). Aspartate 217, glutamate 221, glutamate 390, and glutamate 394 together coordinate Mg(2+). Serine 415 serves as a coordination point for substrate.

This sequence belongs to the ketol-acid reductoisomerase family. It depends on Mg(2+) as a cofactor.

The catalysed reaction is (2R)-2,3-dihydroxy-3-methylbutanoate + NADP(+) = (2S)-2-acetolactate + NADPH + H(+). It carries out the reaction (2R,3R)-2,3-dihydroxy-3-methylpentanoate + NADP(+) = (S)-2-ethyl-2-hydroxy-3-oxobutanoate + NADPH + H(+). Its pathway is amino-acid biosynthesis; L-isoleucine biosynthesis; L-isoleucine from 2-oxobutanoate: step 2/4. The protein operates within amino-acid biosynthesis; L-valine biosynthesis; L-valine from pyruvate: step 2/4. Functionally, involved in the biosynthesis of branched-chain amino acids (BCAA). Catalyzes an alkyl-migration followed by a ketol-acid reduction of (S)-2-acetolactate (S2AL) to yield (R)-2,3-dihydroxy-isovalerate. In the isomerase reaction, S2AL is rearranged via a Mg-dependent methyl migration to produce 3-hydroxy-3-methyl-2-ketobutyrate (HMKB). In the reductase reaction, this 2-ketoacid undergoes a metal-dependent reduction by NADPH to yield (R)-2,3-dihydroxy-isovalerate. In Histophilus somni (strain 2336) (Haemophilus somnus), this protein is Ketol-acid reductoisomerase (NADP(+)).